A 639-amino-acid chain; its full sequence is Probable methyltransferase PMT18 (639 aa).

Over 1–19 the chain is Cytoplasmic; that stretch reads MAKENSSHSLAEAKRKRLT. The helical; Signal-anchor for type II membrane protein transmembrane segment at 20–42 threads the bilayer; it reads WILCVSGLCILSYVLGSWQTNTV. Residues 41-86 are disordered; it reads TVPTSSSEAYSRMGCDETSTTTRAQTTQTQTNPSSDDTSSSLSSSE. The Lumenal portion of the chain corresponds to 43 to 639; that stretch reads PTSSSEAYSR…VKSYWTGPSS (597 aa). Residues 58 to 85 show a composition bias toward low complexity; the sequence is TSTTTRAQTTQTQTNPSSDDTSSSLSSS. N-linked (GlcNAc...) asparagine glycosylation is found at Asn-104 and Asn-427.

Belongs to the methyltransferase superfamily.

Its subcellular location is the endoplasmic reticulum membrane. The polypeptide is Probable methyltransferase PMT18 (Arabidopsis thaliana (Mouse-ear cress)).